The chain runs to 245 residues: MTSATKTNNSGSISSPIVVALDYANKDAALAFADQVSPQDCRLKVGKEMFTLYGPELIRDLHQRGFDVFLDLKFHDIPNTTARAVAAAAELGVWMVNVHASGGARMMSAAKEALLPYGAQAPLLIAVTVLTSMDGEDLRDIGITISPAEQAERLAKLTWDCGLDGVVCSAHEAVRLKQVCGEDFSLVTPGIRPQGSEAGDQRRIMTPEQAVAAGVDYMVIGRPITQSPDPEKTLREILASLTKVA.

Substrate contacts are provided by residues Asp-22, Lys-44, 71 to 80 (DLKFHDIPNT), Thr-131, Arg-192, Gln-201, Gly-221, and Arg-222. Lys-73 functions as the Proton donor in the catalytic mechanism.

It belongs to the OMP decarboxylase family. Type 1 subfamily. As to quaternary structure, homodimer.

The enzyme catalyses orotidine 5'-phosphate + H(+) = UMP + CO2. The protein operates within pyrimidine metabolism; UMP biosynthesis via de novo pathway; UMP from orotate: step 2/2. Functionally, catalyzes the decarboxylation of orotidine 5'-monophosphate (OMP) to uridine 5'-monophosphate (UMP). The sequence is that of Orotidine 5'-phosphate decarboxylase from Yersinia pseudotuberculosis serotype O:3 (strain YPIII).